A 773-amino-acid polypeptide reads, in one-letter code: Immunoglobulin domain and leucine-rich repeat-containing protein 2 (773 aa).

An N-terminal signal peptide occupies residues 1–20 (MRKFVFFVVAILIQIHTTTS). Over 21–493 (QRNRSSSPSG…DWYSYDVFNS (473 aa)) the chain is Extracellular. 6 LRR repeats span residues 52-73 (TRNIQCFSIDESKLLEIQKIYG), 74-96 (SNIQRLELHNWQHDQLNFDIFAP), 97-120 (FPQLEHIILRDGDLESLNGTVIHP), 122-144 (LKVLSIENSELTSSSEVCRLLSI), 145-167 (FPKIQSLSLSKNYFEKFECDTSN), and 168-191 (TKLKILDLSQNRISHLEVPNTLRV). Residue asparagine 114 is glycosylated (N-linked (GlcNAc...) asparagine). N-linked (GlcNAc...) asparagine glycosylation occurs at asparagine 204. LRR repeat units lie at residues 206 to 230 (STKLTDLDISFNKLSLWPSFDDWKF), 233 to 251 (LRSLSAIKLDLQTGFQLDA), 252 to 275 (PLLNSLNIDGASLRYLNFHQILTP), and 296 to 319 (PSTVTDVAFTDTMLRTLPADFIPM). The 131-residue stretch at 349–479 (PVYAQTSIRK…GKDYGIYHFR (131 aa)) folds into the Ig-like domain. N-linked (GlcNAc...) asparagine glycosylation is found at asparagine 361 and asparagine 379. Cysteines 396 and 463 form a disulfide. Residues 494 to 514 (VFWGGLATSLIVCLISFLLNI) form a helical membrane-spanning segment. The Cytoplasmic portion of the chain corresponds to 515 to 773 (TWILTRKSAL…RSPDSPPEKR (259 aa)). The disordered stretch occupies residues 725–773 (VRPGIIPTNAPSIRFTTKPTTSSISNEASTSSPSSSGAHRSPDSPPEKR). The segment covering 733-745 (NAPSIRFTTKPTT) has biased composition (polar residues). A compositionally biased stretch (low complexity) spans 746-763 (SSISNEASTSSPSSSGAH). A compositionally biased stretch (basic and acidic residues) spans 764 to 773 (RSPDSPPEKR).

Its subcellular location is the membrane. The sequence is that of Immunoglobulin domain and leucine-rich repeat-containing protein 2 from Caenorhabditis elegans.